The following is a 485-amino-acid chain: Glutamyl-tRNA(Gln) amidotransferase subunit A (485 aa).

Active-site charge relay system residues include Lys79 and Ser154. The active-site Acyl-ester intermediate is the Ser178.

Belongs to the amidase family. GatA subfamily. Heterotrimer of A, B and C subunits.

It carries out the reaction L-glutamyl-tRNA(Gln) + L-glutamine + ATP + H2O = L-glutaminyl-tRNA(Gln) + L-glutamate + ADP + phosphate + H(+). In terms of biological role, allows the formation of correctly charged Gln-tRNA(Gln) through the transamidation of misacylated Glu-tRNA(Gln) in organisms which lack glutaminyl-tRNA synthetase. The reaction takes place in the presence of glutamine and ATP through an activated gamma-phospho-Glu-tRNA(Gln). In Geobacillus kaustophilus (strain HTA426), this protein is Glutamyl-tRNA(Gln) amidotransferase subunit A.